The primary structure comprises 612 residues: MELAMDNSYAFNQRSTCNGIPSEKKNNFLVSEDHGQKILSVLQNFREQNVFYDFKIIMKDEIIPCHRCVLAACSDFFRAMFEVNMKERDDGSVTITNLSSKAVKAFLDYAYTGKTKITDDNVEMFFQLSSFLQVSFLSKACSDFLIKSINLVNCLQLLSISDSYGSTSLFDHALHFVQHHFSLLFKSGDFLEMNFGVLQKCLESDELNVPEEEMVLKVVLSWTKHNLESRQKYLPHLIEKVRLHQLSEETLQDCLFNEESLLKSTNCFDIIMDAIKCVKGSGGLFPDARPSTTEKYIFIHKTEENGENQYTFCYNIKSDSWKILPQSHLIDLPGSSLSSYGEKIFLTGGCKGKCCRTIRLHIAESYHDATDQTWCYCPVKNDFFLVSTMKTPRTMHTSVMALDRLFVIGGKTRGSRDIKSLLDVESYNPLSKEWISVSPLPRGIYYPEASTCQNVIYVLGSEVEITDAFNPSLDCFFKYNAATDQWSELVAEFGQFFHATLIKAVPVNCTLYICDLSTYKVYSFCPDTCVWKGEGSFECAGFNAGAIGIEDKIYILGGDYAPDEITDEVQVYHSNRSEWEEVSPMPRALTEFYCQVIQFNKYRDPWFSNLCA.

One can recognise a BTB domain in the interval 52–119 (YDFKIIMKDE…AYTGKTKITD (68 aa)). The 101-residue stretch at 150–250 (NLVNCLQLLS…VRLHQLSEET (101 aa)) folds into the BACK domain. Kelch repeat units lie at residues 291–337 (STTE…GSSL), 339–390 (SYGE…STMK), 400–450 (MALD…PEAS), 452–502 (CQNV…ATLI), and 548–595 (GIED…FYCQ).

This chain is Kelch repeat and BTB domain-containing protein 3, found in Pongo abelii (Sumatran orangutan).